The following is a 634-amino-acid chain: Kelch-like protein 22 (634 aa).

Ala-2 is modified (N-acetylalanine). Positions 50 to 117 (FDVVLVVEGR…IYTSELELSL (68 aa)) constitute a BTB domain. Kelch repeat units lie at residues 299–349 (CVVG…VLNN), 350–399 (FVYL…VVGR), 400–446 (YIYA…TLEG), 448–493 (MYVT…TLLD), 494–544 (KLYV…VLDT), and 545–593 (RIYV…VLTL). Phosphothreonine is present on Thr-463. A Phosphotyrosine modification is found at Tyr-466. Positions 600-634 (EPPRGTPDRSQADPDFASEVMSVSDWEEFDNSSED) are disordered. Residue Thr-605 is modified to Phosphothreonine. Residues 624 to 634 (DWEEFDNSSED) are compositionally biased toward acidic residues.

Component of the BCR(KLHL22) E3 ubiquitin ligase complex, at least composed of CUL3, KLHL22 and RBX1. Interacts with PLK1. Interacts with DEPDC5 (via DEP domain); the interaction depends on amino acid availability. Interacts with YWHAE; required for the nuclear localization of KLHL22 upon amino acid starvation.

The protein localises to the cytoplasm. It localises to the cytosol. Its subcellular location is the cytoskeleton. It is found in the microtubule organizing center. The protein resides in the centrosome. The protein localises to the spindle. It localises to the nucleus. Its subcellular location is the lysosome. It participates in protein modification; protein ubiquitination. In terms of biological role, substrate-specific adapter of a BCR (BTB-CUL3-RBX1) E3 ubiquitin ligase complex required for chromosome alignment and localization of PLK1 at kinetochores. The BCR(KLHL22) ubiquitin ligase complex mediates monoubiquitination of PLK1, leading to PLK1 dissociation from phosphoreceptor proteins and subsequent removal from kinetochores, allowing silencing of the spindle assembly checkpoint (SAC) and chromosome segregation. Monoubiquitination of PLK1 does not lead to PLK1 degradation. The BCR(KLHL22) ubiquitin ligase complex is also responsible for the amino acid-stimulated 'Lys-48' polyubiquitination and proteasomal degradation of DEPDC5. Through the degradation of DEPDC5, releases the GATOR1 complex-mediated inhibition of the TORC1 pathway. It is therefore an amino acid-dependent activator within the amino acid-sensing branch of the TORC1 pathway, indirectly regulating different cellular processes including cell growth and autophagy. In Ailuropoda melanoleuca (Giant panda), this protein is Kelch-like protein 22 (KLHL22).